Here is a 166-residue protein sequence, read N- to C-terminus: MNNYQLTINEVIDIINTNTEINKLVAKKENLFPTDLYDLDKQELIAIILNSDFALSSIKRVLLEVTVEELGTQDNDEDDELEDLDGEIDRVDYIDKDGIRFDVPRETSPHVDKSIVTFNDELLDEANKIAKSIQEHDFNDKAIEEAELKIFKNHLPSIYSMKKENK.

It belongs to the phi29likevirus protein p56 family. Homodimer. Interacts with the histone-like protein p6; this interaction optimizes the binding of protein p6 at the viral DNA ends, thus favoring the initiation of replication.

Functionally, involved in the replication of viral DNA. It is required at the very beginning of the virus amplification, conditions in which a low number of viral DNA molecules enter the host cell, possibly to recruit the limiting amount of initiation factors at the replication origins. Once the infection process is established and the other replication proteins reach optimal concentration, it becomes dispensable. Optimizes the binding of protein p6 at the viral DNA ends, thus favoring the initiation of replication. This is DNA replication protein 17 (17) from Bacillus subtilis (Bacteriophage phi-29).